A 226-amino-acid chain; its full sequence is Ribonuclease 3 (226 aa).

One can recognise an RNase III domain in the interval 6-128 (INRLQRKLGY…LIGGIFLDSD (123 aa)). E41 serves as a coordination point for Mg(2+). D45 is a catalytic residue. Residues D114 and E117 each coordinate Mg(2+). The active site involves E117. The DRBM domain maps to 155 to 225 (DPKTRLQEFL…AEQALKQLEL (71 aa)).

The protein belongs to the ribonuclease III family. As to quaternary structure, homodimer. Mg(2+) is required as a cofactor.

The protein localises to the cytoplasm. The enzyme catalyses Endonucleolytic cleavage to 5'-phosphomonoester.. In terms of biological role, digests double-stranded RNA. Involved in the processing of primary rRNA transcript to yield the immediate precursors to the large and small rRNAs (23S and 16S). Processes some mRNAs, and tRNAs when they are encoded in the rRNA operon. Processes pre-crRNA and tracrRNA of type II CRISPR loci if present in the organism. The chain is Ribonuclease 3 from Edwardsiella ictaluri (strain 93-146).